The sequence spans 400 residues: Acetate kinase (400 aa).

Residue Asn9 participates in Mg(2+) binding. Position 16 (Lys16) interacts with ATP. Substrate is bound at residue Arg90. Asp147 serves as the catalytic Proton donor/acceptor. ATP is bound by residues 207-211 (HIGNG), 282-284 (DLR), and 330-334 (GIGEN). A Mg(2+)-binding site is contributed by Glu385.

This sequence belongs to the acetokinase family. Homodimer. The cofactor is Mg(2+). It depends on Mn(2+) as a cofactor.

Its subcellular location is the cytoplasm. It carries out the reaction acetate + ATP = acetyl phosphate + ADP. The protein operates within metabolic intermediate biosynthesis; acetyl-CoA biosynthesis; acetyl-CoA from acetate: step 1/2. Functionally, catalyzes the formation of acetyl phosphate from acetate and ATP. Can also catalyze the reverse reaction. This is Acetate kinase from Staphylococcus aureus (strain JH1).